A 237-amino-acid polypeptide reads, in one-letter code: 2-C-methyl-D-erythritol 4-phosphate cytidylyltransferase (237 aa).

This sequence belongs to the IspD/TarI cytidylyltransferase family. IspD subfamily. Homodimer.

It carries out the reaction 2-C-methyl-D-erythritol 4-phosphate + CTP + H(+) = 4-CDP-2-C-methyl-D-erythritol + diphosphate. It participates in isoprenoid biosynthesis; isopentenyl diphosphate biosynthesis via DXP pathway; isopentenyl diphosphate from 1-deoxy-D-xylulose 5-phosphate: step 2/6. In terms of biological role, catalyzes the formation of 4-diphosphocytidyl-2-C-methyl-D-erythritol from CTP and 2-C-methyl-D-erythritol 4-phosphate (MEP). The polypeptide is 2-C-methyl-D-erythritol 4-phosphate cytidylyltransferase (Pectobacterium atrosepticum (strain SCRI 1043 / ATCC BAA-672) (Erwinia carotovora subsp. atroseptica)).